We begin with the raw amino-acid sequence, 51 residues long: ASTQHLCGSHLVEALYLVCGSNGFFFNPKDGIVEQCCHKPCSIFDLQNYCN.

3 disulfides stabilise this stretch: Cys7–Cys37, Cys19–Cys50, and Cys36–Cys41.

The protein belongs to the insulin family. In terms of assembly, heterodimer of a B chain and an A chain linked by two disulfide bonds.

It localises to the secreted. Insulin decreases blood glucose concentration. It increases cell permeability to monosaccharides, amino acids and fatty acids. It accelerates glycolysis, the pentose phosphate cycle, and glycogen synthesis in liver. The polypeptide is Insulin (ins) (Anguilla rostrata (American eel)).